The chain runs to 289 residues: Phosphatidylglycerol--prolipoprotein diacylglyceryl transferase (289 aa).

The next 3 membrane-spanning stretches (helical) occupy residues 13 to 33 (LGPLAIRWYALAYVAGILLGW), 61 to 81 (FILWVTLAIIVGGRLGHVLFY), and 99 to 119 (GGMSFHGGAIGVFLAIILFAM). Residue R144 participates in a 1,2-diacyl-sn-glycero-3-phospho-(1'-sn-glycerol) binding. Helical transmembrane passes span 218-238 (GVVMGLFTTFYAVFRISLENV) and 250-270 (LGLTMGIYLSIPMLLFGLWLI).

The protein belongs to the Lgt family.

It localises to the cell inner membrane. It catalyses the reaction L-cysteinyl-[prolipoprotein] + a 1,2-diacyl-sn-glycero-3-phospho-(1'-sn-glycerol) = an S-1,2-diacyl-sn-glyceryl-L-cysteinyl-[prolipoprotein] + sn-glycerol 1-phosphate + H(+). Its pathway is protein modification; lipoprotein biosynthesis (diacylglyceryl transfer). Catalyzes the transfer of the diacylglyceryl group from phosphatidylglycerol to the sulfhydryl group of the N-terminal cysteine of a prolipoprotein, the first step in the formation of mature lipoproteins. This chain is Phosphatidylglycerol--prolipoprotein diacylglyceryl transferase, found in Phenylobacterium zucineum (strain HLK1).